Reading from the N-terminus, the 531-residue chain is Zinc finger protein 703-B (531 aa).

The segment covering 1-10 (MNCSPPGSCT) has biased composition (polar residues). Disordered regions lie at residues 1 to 28 (MNCS…ATLA), 88 to 249 (SQIG…VAPI), and 295 to 318 (VGNQ…LTGA). Composition is skewed to low complexity over residues 19–28 (TPATPCATLA) and 113–122 (RSSSLKLGES). Polar residues predominate over residues 171 to 180 (SPSSRVSSPG). Over residues 183–198 (CESKNNESQEKKEPEV) the composition is skewed to basic and acidic residues. Positions 199-215 (NKSSLETSQANPTLTRA) are enriched in polar residues. The span at 216-227 (SISNSSAESSQS) shows a compositional bias: low complexity. The C2H2-type zinc finger occupies 404–432 (HICNWVSASGPCDKRFATSEELLAHLRTH).

The protein belongs to the Elbow/Noc family.

The protein localises to the nucleus. The protein resides in the cytoplasm. Functionally, transcriptional corepressor which does not bind directly to DNA and may regulate transcription through recruitment of histone deacetylases to gene promoters. Regulates cell adhesion, migration and proliferation. Involved in specification of the lateral neural plate border (NPB). May be required for segmental gene expression during hindbrain development. This chain is Zinc finger protein 703-B (znf703-b), found in Xenopus laevis (African clawed frog).